The sequence spans 85 residues: Insect toxin 2-53 (85 aa).

Residues 1–21 (MKLLLLLIVSASMLIESLVNA) form the signal peptide. An LCN-type CS-alpha/beta domain is found at 22–82 (DGYIKRRDGC…TWKSETNTCG (61 aa)). Cystine bridges form between cysteine 31/cysteine 81, cysteine 35/cysteine 56, cysteine 42/cysteine 63, and cysteine 46/cysteine 65. Residue glycine 82 is modified to Glycine amide.

It belongs to the long (4 C-C) scorpion toxin superfamily. Sodium channel inhibitor family. Beta subfamily. As to expression, expressed by the venom gland.

The protein localises to the secreted. Depressant insect toxins cause a transient contraction paralysis followed by a slow flaccid paralysis. They bind voltage-independently to sodium channels (Nav) and block action potentials, primarily by depolarizing the axonal membrane and suppressing the sodium current. In Leiurus hebraeus (Hebrew deathstalker scorpion), this protein is Insect toxin 2-53.